We begin with the raw amino-acid sequence, 57 residues long: YPANEGCLLPMKVGPCRAAWPSYYYNSKSEKCEEFTYGGCDANANNFQTEEECKKAC.

The 51-residue stretch at 7-57 (CLLPMKVGPCRAAWPSYYYNSKSEKCEEFTYGGCDANANNFQTEEECKKAC) folds into the BPTI/Kunitz inhibitor domain. 3 disulfide bridges follow: cysteine 7/cysteine 57, cysteine 16/cysteine 40, and cysteine 32/cysteine 53.

It belongs to the venom Kunitz-type family. Sea anemone type 2 potassium channel toxin subfamily. In terms of tissue distribution, expressed by acrorhagi.

It localises to the secreted. Its subcellular location is the nematocyst. Its function is as follows. Serine protease inhibitor that is strongly active against trypsin (700 IU/mg) and moderately active against plasmin. The chain is PI-actitoxin-Aeq3c from Actinia equina (Beadlet anemone).